A 473-amino-acid polypeptide reads, in one-letter code: Ribosomal RNA small subunit methyltransferase F (473 aa).

S-adenosyl-L-methionine-binding positions include 124 to 130, glutamate 148, aspartate 175, and aspartate 193; that span reads ASAPGSK. Cysteine 246 serves as the catalytic Nucleophile.

The protein belongs to the class I-like SAM-binding methyltransferase superfamily. RsmB/NOP family.

It localises to the cytoplasm. It catalyses the reaction cytidine(1407) in 16S rRNA + S-adenosyl-L-methionine = 5-methylcytidine(1407) in 16S rRNA + S-adenosyl-L-homocysteine + H(+). Functionally, specifically methylates the cytosine at position 1407 (m5C1407) of 16S rRNA. The chain is Ribosomal RNA small subunit methyltransferase F from Aliivibrio fischeri (strain ATCC 700601 / ES114) (Vibrio fischeri).